We begin with the raw amino-acid sequence, 1179 residues long: Protein turtle homolog A (1179 aa).

Residues 1–20 form the signal peptide; sequence MVWCLGLAVLSLVISQGADG. Topologically, residues 21-734 are extracellular; that stretch reads RGKPEVVSVV…TQLPGLLPQP (714 aa). Ig-like domains are found at residues 24-124, 136-216, 226-318, 322-410, and 418-502; these read PEVV…DFAN, PQFQ…GSAT, PPVI…AYLT, PAQV…SPVT, and PAFI…TNVY. Intrachain disulfides connect Cys-41–Cys-108, Cys-158–Cys-206, Cys-248–Cys-301, Cys-344–Cys-395, and Cys-440–Cys-486. N-linked (GlcNAc...) asparagine glycosylation is found at Asn-188 and Asn-256. Fibronectin type-III domains lie at 507 to 611 and 623 to 718; these read SPHV…TTPA and PLSP…TSGL. 2 N-linked (GlcNAc...) asparagine glycosylation sites follow: Asn-513 and Asn-524. The segment at 606 to 626 is disordered; that stretch reads LPTTPAAPGLPPTEIPPPLSP. The segment covering 613-626 has biased composition (pro residues); sequence PGLPPTEIPPPLSP. Residues 735–755 form a helical membrane-spanning segment; it reads VLAGVVGGVCFLGVAVLVSIL. Over 756–1179 the chain is Cytoplasmic; sequence AGCLLNRRRA…VPHPEQATLL (424 aa). 3 disordered regions span residues 767-919, 940-988, and 1015-1079; these read RRRR…PLPG, DWPP…VVGA, and AAPR…KRRN. The span at 785–800 shows a compositional bias: low complexity; that stretch reads GKSAAPSALGSGSPDS. Residue Ser-809 is modified to Phosphoserine. 2 stretches are compositionally biased toward pro residues: residues 826 to 836 and 906 to 919; these read TPSPHPDPPSS and VAPP…PLPG. Thr-972 carries the phosphothreonine modification. Residues 1177 to 1179 carry the PDZ-binding motif; it reads TLL.

Belongs to the immunoglobulin superfamily. Turtle family. As to quaternary structure, interacts with MAGI2 and SHANK1.

It is found in the cell membrane. The protein localises to the synapse. Functionally, functions in dendrite outgrowth and synapse maturation. In Homo sapiens (Human), this protein is Protein turtle homolog A (IGSF9).